Here is a 478-residue protein sequence, read N- to C-terminus: UDP-N-acetylmuramate--L-alanine ligase (478 aa).

130–136 (GTHGKTT) serves as a coordination point for ATP.

It belongs to the MurCDEF family.

The protein localises to the cytoplasm. The catalysed reaction is UDP-N-acetyl-alpha-D-muramate + L-alanine + ATP = UDP-N-acetyl-alpha-D-muramoyl-L-alanine + ADP + phosphate + H(+). It participates in cell wall biogenesis; peptidoglycan biosynthesis. In terms of biological role, cell wall formation. The protein is UDP-N-acetylmuramate--L-alanine ligase of Microcystis aeruginosa (strain NIES-843 / IAM M-2473).